The primary structure comprises 960 residues: MNKNLRFTQMMIGISTMALSFGSIQTQVSAEETAPYNILQMKPMGTETSKDEIVHATKADETLNFEERLKIGDFSQRPTLVMKRDEIQLKQSYTLAELNKMPNSELIDTLSKISWNQITDLFQFNQDTKAFYQNKERMNVIINELGQRGRTFTKENSKGIETFVEVLRSAFYVGYYNNELSYLKERSFHDKCLPALKAIAKNRNFTLGTAEQDRVVTAYGKLIGNASSDTETVQYAVNVLKHYNDNLSTYVSDYAKGQAVYEIVKGIDYDIQSYLQDTNKQPNETMWYGKIDNFINEVNRIALVGNITNENSWLINNGIYYAGRLGKFHSNPNKGLEVITQAMNLYPRLSGAYFVAVEQMKTNYGGKDYSGNAVDLQKIREEGKQQYLPKTYTFDDGSIVFKTGDKVTEEKIKRLYWAAKEVKAQYHRVIGNDKALEPGNADDVLTIVIYNNPDEYQLNRQLYGYETNNGGIYIEEKGTFFTYERTPKQSIYSLEELFRHEFTHYLQGRYEVPGLFGSGEMYQNERLTWFQEGNAEFFAGSTRTNNVVPRKSMISGLSSDPASRYTVKQTLFSKYGSWDFYKYSFALQSYLYNHQFETFDKLQDLIRANDVKNYDSYRESLSNNTQLNAEYQAYMQQLIDNQDKYNVPKVTNDYLIQHAPKPLAEVKNEIVDVANIKDAKITKYESQFFNTFTVEGKYTGGTSKGESEDWKAMSKQVNQTLEQLSQKGWSGYKTVTAYFVNYRVNAANQFEYDIVFHGVATEEKEKTTTIVNMNGPYSGIVNEEIQFHSDGTKSENGKVISYLWNFGDGTTSTEANPTHVYGEKGTYTVELTVKDSRGKESKEQTKVTVKQDPQTSESYEEEKVLPFNTLVKGNLITPDQTDVYTFNVTDPKEVDISVVNEQNIGMTWVLYHESDMQNYVACGEDEGNVIKGKFAAKPGKYYLNVYKFDDKNGEYSLLVK.

A signal peptide spans 1–30 (MNKNLRFTQMMIGISTMALSFGSIQTQVSA). The propeptide occupies 31–92 (EETAPYNILQ…KRDEIQLKQS (62 aa)). The segment at 93-365 (YTLAELNKMP…AVEQMKTNYG (273 aa)) is activator domain. The interval 93–764 (YTLAELNKMP…VFHGVATEEK (672 aa)) is S1 metalloprotease domain. A catalytic subdomain region spans residues 375-644 (DLQKIREEGK…MQQLIDNQDK (270 aa)). His-500 is a binding site for Zn(2+). The active site involves Glu-501. 2 residues coordinate Zn(2+): His-504 and Glu-532. The helper subdomain stretch occupies residues 652 to 764 (NDYLIQHAPK…VFHGVATEEK (113 aa)). The PKD domain occupies 768–849 (TTIVNMNGPY…ESKEQTKVTV (82 aa)). The segment covering 836 to 845 (SRGKESKEQT) has biased composition (basic and acidic residues). Residues 836–859 (SRGKESKEQTKVTVKQDPQTSESY) are disordered. A compositionally biased stretch (polar residues) spans 846 to 857 (KVTVKQDPQTSE). Positions 852-960 (DPQTSESYEE…KNGEYSLLVK (109 aa)) are collagen-binding domain.

This sequence belongs to the peptidase M9B family. Collagenase subfamily. The cofactor is Ca(2+). Zn(2+) is required as a cofactor.

It is found in the secreted. The enzyme catalyses Digestion of native collagen in the triple helical region at Xaa-|-Gly bonds. With synthetic peptides, a preference is shown for Gly at P3 and P1', Pro and Ala at P2 and P2', and hydroxyproline, Ala or Arg at P3'.. Functionally, acts as a true collagenase, which is highly active and efficiently targets native tropocollagen. In vitro, can also cleave gelatin and the synthetic peptide FALGPA (furylacryloyl-Leu-Gly-Pro-Ala). May contribute to bacterial virulence in endophthalmitis or opportunistic infections via collagen degradation in the host extracellular matrix (ECM). The chain is Collagenase ColA from Bacillus cereus (strain ATCC 14579 / DSM 31 / CCUG 7414 / JCM 2152 / NBRC 15305 / NCIMB 9373 / NCTC 2599 / NRRL B-3711).